The following is a 486-amino-acid chain: MAAAAGAAARGGGVIPAGKGGSLRSPGKPVVLADITNTGRPNPTGSVHAIADVLKENAKLRHLLAERNKVIEVSRVELQKIRLALQAMQQKNLQLVQANSQMFAEINQGKDRIKLLQHELACTIAVLKVKGSELEKMSKTSNNQQNRAKILEKKTRSSKCAPTKAHQMAAGSIREHLVEIQSAVPSYTSCHEPPQDKTNKRCTNRRKSESCEVTMDTNTVQHSCRPHVEYNGSSHDDDPRKTRRRRSARLNPGSFEVAEICDKLHEDATVPSAPSSNVPKLQEPNAGKDMICGGKMKSLQKELPCDAIAQVVEAPELKEIQEAGSSVAGGEAHKFDIEDPEPPRKSMRIDANKRKLESFESRLASNKEDCINAICDSTSSVPIQHEQKRKLSRRKSSRLDPGPWEVTNGTFEIVQEDTVAPSAPSSSNALIEQTKNDMQNDRSCSTKPSDEQVIGRRSSVGRPSRRAAEKIVSYKEVPLNIKMRRP.

Positions 71–154 form a coiled coil; the sequence is IEVSRVELQK…QNRAKILEKK (84 aa). Disordered regions lie at residues 137–163, 187–209, 222–251, 323–346, 382–403, and 418–467; these read MSKT…CAPT, YTSC…RKSE, HSCR…ARLN, AGSS…PRKS, PIQH…DPGP, and TVAP…SRRA. The span at 331–346 shows a compositional bias: basic and acidic residues; sequence EAHKFDIEDPEPPRKS. Basic residues predominate over residues 387-396; the sequence is QKRKLSRRKS. Residues 423–433 are compositionally biased toward polar residues; sequence APSSSNALIEQ.

This sequence belongs to the shugoshin family. Highly expressed in roots. Expressed in panicles. Expressed at low levels in leaves.

It localises to the nucleus. The protein resides in the nucleolus. The protein localises to the chromosome. It is found in the centromere. Its function is as follows. Plays a central role in chromosome cohesion during meiosis I by preventing premature dissociation of cohesin complex from centromeres after prophase, when most of cohesin complex dissociates from chromosomes arms. Required for the timely assembly and maintenance of synaptonemal complex (SC) during early prophase I. Required for maintenance of centromeric cohesion before prophase II and correct segregation of chromatids during meiosis II. Has apparently no function in mitosis. The protein is Shugoshin-1 of Oryza sativa subsp. japonica (Rice).